Consider the following 360-residue polypeptide: Ribosomal RNA large subunit methyltransferase M (360 aa).

Residues S187, 220-223, D239, D259, and D276 contribute to the S-adenosyl-L-methionine site; that span reads CPGG. K305 (proton acceptor) is an active-site residue.

It belongs to the class I-like SAM-binding methyltransferase superfamily. RNA methyltransferase RlmE family. RlmM subfamily. Monomer.

It is found in the cytoplasm. It carries out the reaction cytidine(2498) in 23S rRNA + S-adenosyl-L-methionine = 2'-O-methylcytidine(2498) in 23S rRNA + S-adenosyl-L-homocysteine + H(+). Its function is as follows. Catalyzes the 2'-O-methylation at nucleotide C2498 in 23S rRNA. In Shewanella pealeana (strain ATCC 700345 / ANG-SQ1), this protein is Ribosomal RNA large subunit methyltransferase M.